The following is a 362-amino-acid chain: S-adenosylmethionine:tRNA ribosyltransferase-isomerase (362 aa).

This sequence belongs to the QueA family. Monomer.

Its subcellular location is the cytoplasm. The enzyme catalyses 7-aminomethyl-7-carbaguanosine(34) in tRNA + S-adenosyl-L-methionine = epoxyqueuosine(34) in tRNA + adenine + L-methionine + 2 H(+). It functions in the pathway tRNA modification; tRNA-queuosine biosynthesis. Its function is as follows. Transfers and isomerizes the ribose moiety from AdoMet to the 7-aminomethyl group of 7-deazaguanine (preQ1-tRNA) to give epoxyqueuosine (oQ-tRNA). In Xanthobacter autotrophicus (strain ATCC BAA-1158 / Py2), this protein is S-adenosylmethionine:tRNA ribosyltransferase-isomerase.